Reading from the N-terminus, the 263-residue chain is Phosphatidylglycerol--prolipoprotein diacylglyceryl transferase (263 aa).

Helical transmembrane passes span 10–30, 56–76, 91–111, and 117–137; these read VAIT…LFGF, MVTY…ILFY, IWNG…AMWL, and GLGF…GLFF. Arg-139 is an a 1,2-diacyl-sn-glycero-3-phospho-(1'-sn-glycerol) binding site. Transmembrane regions (helical) follow at residues 171 to 191, 199 to 219, and 231 to 251; these read PSQL…LWVF, GHVS…VEFV, and FGWL…GLWL.

The protein belongs to the Lgt family.

It is found in the cell inner membrane. The enzyme catalyses L-cysteinyl-[prolipoprotein] + a 1,2-diacyl-sn-glycero-3-phospho-(1'-sn-glycerol) = an S-1,2-diacyl-sn-glyceryl-L-cysteinyl-[prolipoprotein] + sn-glycerol 1-phosphate + H(+). It functions in the pathway protein modification; lipoprotein biosynthesis (diacylglyceryl transfer). Catalyzes the transfer of the diacylglyceryl group from phosphatidylglycerol to the sulfhydryl group of the N-terminal cysteine of a prolipoprotein, the first step in the formation of mature lipoproteins. In Nitratidesulfovibrio vulgaris (strain ATCC 29579 / DSM 644 / CCUG 34227 / NCIMB 8303 / VKM B-1760 / Hildenborough) (Desulfovibrio vulgaris), this protein is Phosphatidylglycerol--prolipoprotein diacylglyceryl transferase.